We begin with the raw amino-acid sequence, 249 residues long: MLYVVGIGSGNERHFTKEAEEILNKVDLIVCYKNYKKFVERLNKPIYTTGMTREIDRVDYALKEAKDKDVALVSSGDATIYGLASLAYEINAVKGYNVDIKVVPGITACSLASAILGSPLNHDFVVISFSDLLTPLETILKRFRCALEGDFVICIYNPLSKRRKEPFLKAMEILAEFAKDKDYIIGIVKNAGRNKEEVVITNFKDLYKNLEKYLEFIDMNTILIIGNSSTKIINGKMITPRGYLDKYKI.

Belongs to the precorrin methyltransferase family.

It catalyses the reaction Co(II)-factor III + S-adenosyl-L-methionine + H(+) = Co(II)-factor IV + S-adenosyl-L-homocysteine. It functions in the pathway cofactor biosynthesis; adenosylcobalamin biosynthesis; cob(II)yrinate a,c-diamide from sirohydrochlorin (anaerobic route): step 3/10. Functionally, methyltransferase that likely catalyzes the ring contraction and methylation of C-17 in cobalt-factor III to form cobalt-factor IV. May also convert cobalt-precorrin-3 to cobalt-precorrin-4. This is Probable cobalt-factor III C(17)-methyltransferase (cbiH) from Methanocaldococcus jannaschii (strain ATCC 43067 / DSM 2661 / JAL-1 / JCM 10045 / NBRC 100440) (Methanococcus jannaschii).